We begin with the raw amino-acid sequence, 82 residues long: Small ribosomal subunit protein uS17 (82 aa).

This sequence belongs to the universal ribosomal protein uS17 family. In terms of assembly, part of the 30S ribosomal subunit.

One of the primary rRNA binding proteins, it binds specifically to the 5'-end of 16S ribosomal RNA. The polypeptide is Small ribosomal subunit protein uS17 (Shewanella sediminis (strain HAW-EB3)).